The chain runs to 418 residues: AA14 family lytic polysaccharide monooxygenase B (418 aa).

A signal peptide spans 1 to 18 (MIPVFLAAVAAFLPLTSG). Residues N31, N94, and N151 are each glycosylated (N-linked (GlcNAc...) asparagine). 4 disulfides stabilise this stretch: C85/C108, C127/C154, C171/C176, and C178/C200. N201 and N235 each carry an N-linked (GlcNAc...) asparagine glycan. Residues C220 and C236 are joined by a disulfide bond. Positions 307-343 (AAATPAPSSSGSSPSSSSPGSSSTASTTSTSGPRPSA) are enriched in low complexity. Residues 307 to 364 (AAATPAPSSSGSSPSSSSPGSSSTASTTSTSGPRPSARGFRRSTGERPPTGVPTPRKS) are disordered.

The protein belongs to the polysaccharide monooxygenase AA14 family. The cofactor is Cu(2+).

Its subcellular location is the secreted. Functionally, lytic polysaccharide monooxygenase (LPMO) that oxidatively cleaves xylan with both C1 and C4 regioselectivity and that specifically targets the protective shield made by heteroxylans that cover cellulose microfibrils in wood. Catalysis by LPMOs requires the reduction of the active-site copper from Cu(II) to Cu(I) by a reducing agent and H(2)O(2) or O(2) as a cosubstrate. Cleavage occurs only when xylans are bound to cellulose and not when they are in solution. Increases the efficiency of wood saccharification through oxidative cleavage of highly refractory xylan-coated cellulose fibers via synergistic relationship with xylan-active enzymes, xylobiohydrolases and cellobiohydrolases. This Trametes coccinea (strain BRFM310) (Pycnoporus coccineus) protein is AA14 family lytic polysaccharide monooxygenase B.